We begin with the raw amino-acid sequence, 102 residues long: Fe-S protein maturation auxiliary factor YitW (102 aa).

Belongs to the MIP18 family.

In terms of biological role, involved in the maturation of iron-sulfur (Fe-S) proteins. May function as a Fe-S cluster carrier. The sequence is that of Fe-S protein maturation auxiliary factor YitW (yitW) from Bacillus subtilis (strain 168).